The sequence spans 346 residues: Phenylalanine--tRNA ligase alpha subunit (346 aa).

Glu-260 serves as a coordination point for Mg(2+).

The protein belongs to the class-II aminoacyl-tRNA synthetase family. Phe-tRNA synthetase alpha subunit type 1 subfamily. Tetramer of two alpha and two beta subunits. Requires Mg(2+) as cofactor.

The protein localises to the cytoplasm. It catalyses the reaction tRNA(Phe) + L-phenylalanine + ATP = L-phenylalanyl-tRNA(Phe) + AMP + diphosphate + H(+). This chain is Phenylalanine--tRNA ligase alpha subunit, found in Herpetosiphon aurantiacus (strain ATCC 23779 / DSM 785 / 114-95).